Reading from the N-terminus, the 500-residue chain is ATP synthase subunit alpha (500 aa).

Position 167 to 174 (167 to 174 (GDRQTGKT)) interacts with ATP.

Belongs to the ATPase alpha/beta chains family. As to quaternary structure, F-type ATPases have 2 components, CF(1) - the catalytic core - and CF(0) - the membrane proton channel. CF(1) has five subunits: alpha(3), beta(3), gamma(1), delta(1), epsilon(1). CF(0) has three main subunits: a(1), b(2) and c(9-12). The alpha and beta chains form an alternating ring which encloses part of the gamma chain. CF(1) is attached to CF(0) by a central stalk formed by the gamma and epsilon chains, while a peripheral stalk is formed by the delta and b chains.

Its subcellular location is the cell inner membrane. It catalyses the reaction ATP + H2O + 4 H(+)(in) = ADP + phosphate + 5 H(+)(out). Its function is as follows. Produces ATP from ADP in the presence of a proton gradient across the membrane. The alpha chain is a regulatory subunit. In Wolinella succinogenes (strain ATCC 29543 / DSM 1740 / CCUG 13145 / JCM 31913 / LMG 7466 / NCTC 11488 / FDC 602W) (Vibrio succinogenes), this protein is ATP synthase subunit alpha.